A 269-amino-acid chain; its full sequence is Shikimate dehydrogenase (NADP(+)) (269 aa).

Residues 17 to 19 (SKS) and threonine 64 each bind shikimate. Lysine 68 serves as the catalytic Proton acceptor. Aspartate 80 provides a ligand contact to NADP(+). Shikimate-binding residues include asparagine 89 and aspartate 105. NADP(+) contacts are provided by residues 130 to 134 (GAGGA), 154 to 159 (NRTHAK), and methionine 213. Position 215 (tyrosine 215) interacts with shikimate. Glycine 237 contacts NADP(+).

It belongs to the shikimate dehydrogenase family. As to quaternary structure, homodimer.

The catalysed reaction is shikimate + NADP(+) = 3-dehydroshikimate + NADPH + H(+). It functions in the pathway metabolic intermediate biosynthesis; chorismate biosynthesis; chorismate from D-erythrose 4-phosphate and phosphoenolpyruvate: step 4/7. Functionally, involved in the biosynthesis of the chorismate, which leads to the biosynthesis of aromatic amino acids. Catalyzes the reversible NADPH linked reduction of 3-dehydroshikimate (DHSA) to yield shikimate (SA). The polypeptide is Shikimate dehydrogenase (NADP(+)) (Neisseria polysaccharea).